Here is a 121-residue protein sequence, read N- to C-terminus: Non-structural protein 8 (121 aa).

The signal sequence occupies residues 1 to 15 (MKLLIVFGLLTSVYC). Positions 19–121 (ECSIQECCEN…HDVRVVLDFI (103 aa)) constitute an SARS ORF8 Ig-like domain. Intrachain disulfides connect cysteine 25–cysteine 90, cysteine 37–cysteine 102, and cysteine 61–cysteine 83.

This Rhinolophus macrotis (Big-eared horseshoe bat) protein is Non-structural protein 8.